Consider the following 731-residue polypeptide: Wall-associated receptor kinase-like 5 (731 aa).

A signal peptide spans Met1 to Ala26. Over Ala27–Val360 the chain is Extracellular. Asn37, Asn43, Asn73, Asn96, Asn124, Asn137, Asn236, and Asn272 each carry an N-linked (GlcNAc...) asparagine glycan. The atypical EGF-like stretch occupies residues Cys285–Cys342. 3 cysteine pairs are disulfide-bonded: Cys287–Cys300, Cys322–Cys333, and Cys328–Cys342. Residues Leu361–Ile381 traverse the membrane as a helical segment. Topologically, residues Lys382–Glu731 are cytoplasmic. The region spanning Phe432–Ile705 is the Protein kinase domain. Residues Leu438–Val446 and Lys460 each bind ATP. Position 505 is a phosphotyrosine (Tyr505). Asp557 functions as the Proton acceptor in the catalytic mechanism. Phosphothreonine occurs at positions 591 and 596. A Phosphotyrosine modification is found at Tyr604. The interval Pro709 to Glu731 is disordered.

It belongs to the protein kinase superfamily. Ser/Thr protein kinase family. In terms of tissue distribution, preferentially expressed in roots and flowers.

The protein localises to the membrane. It catalyses the reaction L-seryl-[protein] + ATP = O-phospho-L-seryl-[protein] + ADP + H(+). The catalysed reaction is L-threonyl-[protein] + ATP = O-phospho-L-threonyl-[protein] + ADP + H(+). Serine/threonine-protein kinase that may function as a signaling receptor of extracellular matrix component. May be involved in plant's response to pathogen infection. This Arabidopsis thaliana (Mouse-ear cress) protein is Wall-associated receptor kinase-like 5 (WAKL5).